The chain runs to 189 residues: Elongation factor P (189 aa).

Position 34 is an N6-(3,6-diaminohexanoyl)-5-hydroxylysine (Lys34).

It belongs to the elongation factor P family. In terms of processing, may be beta-lysylated on the epsilon-amino group of Lys-34 by the combined action of EpmA and EpmB, and then hydroxylated on the C5 position of the same residue by EpmC (if this protein is present). Lysylation is critical for the stimulatory effect of EF-P on peptide-bond formation. The lysylation moiety may extend toward the peptidyltransferase center and stabilize the terminal 3-CCA end of the tRNA. Hydroxylation of the C5 position on Lys-34 may allow additional potential stabilizing hydrogen-bond interactions with the P-tRNA.

The protein resides in the cytoplasm. It participates in protein biosynthesis; polypeptide chain elongation. Its function is as follows. Involved in peptide bond synthesis. Alleviates ribosome stalling that occurs when 3 or more consecutive Pro residues or the sequence PPG is present in a protein, possibly by augmenting the peptidyl transferase activity of the ribosome. Modification of Lys-34 is required for alleviation. The protein is Elongation factor P of Alkalilimnicola ehrlichii (strain ATCC BAA-1101 / DSM 17681 / MLHE-1).